The sequence spans 344 residues: tRNA N6-adenosine threonylcarbamoyltransferase (344 aa).

Residues histidine 111 and histidine 115 each contribute to the Fe cation site. Substrate contacts are provided by residues 134-138 (LVSGG), aspartate 167, glycine 180, and asparagine 274. Aspartate 302 contributes to the Fe cation binding site.

The protein belongs to the KAE1 / TsaD family. Fe(2+) is required as a cofactor.

Its subcellular location is the cytoplasm. It catalyses the reaction L-threonylcarbamoyladenylate + adenosine(37) in tRNA = N(6)-L-threonylcarbamoyladenosine(37) in tRNA + AMP + H(+). Functionally, required for the formation of a threonylcarbamoyl group on adenosine at position 37 (t(6)A37) in tRNAs that read codons beginning with adenine. Is involved in the transfer of the threonylcarbamoyl moiety of threonylcarbamoyl-AMP (TC-AMP) to the N6 group of A37, together with TsaE and TsaB. TsaD likely plays a direct catalytic role in this reaction. The protein is tRNA N6-adenosine threonylcarbamoyltransferase of Dechloromonas aromatica (strain RCB).